Consider the following 161-residue polypeptide: Globin CTT-VIIB-5/CTT-VIIB-9 (161 aa).

A signal peptide spans 1–16 (MKFFAVLALCIVGAIA). A Globin domain is found at 18-161 (PLTADEASLV…NTFAIVVPRL (144 aa)). Heme b is bound by residues His76 and His111.

This sequence belongs to the globin family. In terms of assembly, homodimer.

This chain is Globin CTT-VIIB-5/CTT-VIIB-9 (CTT-7B5), found in Chironomus thummi thummi (Midge).